A 1517-amino-acid chain; its full sequence is DNA-directed RNA polymerase subunit beta' (1517 aa).

Residues cysteine 71, cysteine 73, cysteine 86, and cysteine 89 each contribute to the Zn(2+) site. The Mg(2+) site is built by aspartate 482, aspartate 484, and aspartate 486. Cysteine 812, cysteine 886, cysteine 893, and cysteine 896 together coordinate Zn(2+).

Belongs to the RNA polymerase beta' chain family. As to quaternary structure, the RNAP catalytic core consists of 2 alpha, 1 beta, 1 beta' and 1 omega subunit. When a sigma factor is associated with the core the holoenzyme is formed, which can initiate transcription. Mg(2+) is required as a cofactor. The cofactor is Zn(2+).

It catalyses the reaction RNA(n) + a ribonucleoside 5'-triphosphate = RNA(n+1) + diphosphate. Functionally, DNA-dependent RNA polymerase catalyzes the transcription of DNA into RNA using the four ribonucleoside triphosphates as substrates. The polypeptide is DNA-directed RNA polymerase subunit beta' (Campylobacter lari (strain RM2100 / D67 / ATCC BAA-1060)).